Consider the following 393-residue polypeptide: Selenide, water dikinase (393 aa).

The disordered stretch occupies residues 1 to 21; that stretch reads MSEKEGKVIPETNGMKRPRFD. The active site involves C42. ATP-binding positions include K45, 68–70, D93, D116, and 167–170; these read GMD and GGQT. Mg(2+) is bound at residue D70. D116 contacts Mg(2+). Residue D273 coordinates Mg(2+).

The protein belongs to the selenophosphate synthase 1 family. Class I subfamily. Homodimer. Mg(2+) serves as cofactor.

It catalyses the reaction hydrogenselenide + ATP + H2O = selenophosphate + AMP + phosphate + 2 H(+). In terms of biological role, synthesizes selenophosphate from selenide and ATP. This is Selenide, water dikinase from Trypanosoma brucei brucei (strain 927/4 GUTat10.1).